A 472-amino-acid polypeptide reads, in one-letter code: L-fuculokinase (472 aa).

Belongs to the FGGY kinase family. Requires a divalent metal cation as cofactor.

It carries out the reaction L-fuculose + ATP = L-fuculose 1-phosphate + ADP + H(+). It functions in the pathway carbohydrate degradation; L-fucose degradation; L-lactaldehyde and glycerone phosphate from L-fucose: step 2/3. Functionally, catalyzes the phosphorylation of L-fuculose. This chain is L-fuculokinase, found in Escherichia coli O157:H7.